A 207-amino-acid chain; its full sequence is High frequency lysogenization protein HflD homolog (207 aa).

The protein belongs to the HflD family.

Its subcellular location is the cytoplasm. The protein resides in the cell inner membrane. The chain is High frequency lysogenization protein HflD homolog from Tolumonas auensis (strain DSM 9187 / NBRC 110442 / TA 4).